The primary structure comprises 211 residues: Outer surface protein C (211 aa).

The first 18 residues, 1–18, serve as a signal peptide directing secretion; sequence MKKNTLSAILMTLFLFIS. The N-palmitoyl cysteine moiety is linked to residue cysteine 19. Cysteine 19 carries S-diacylglycerol cysteine lipidation.

This sequence belongs to the OspC lipoprotein family. As to quaternary structure, homodimer. Interacts with tick I.ricinus salivary protein Iric-1, Iric-2 and Iric-3. Binds human (host) plasminogen.

It is found in the cell outer membrane. The protein localises to the cell surface. Functionally, major immunodominant protein in mammalian hosts. Required for initial stages of mammalian infection. Inhibits macrophage-mediated phagocytosis of the bacteria. Binds human plasminogen; this probably confers an extracellular protease activity on the bacteria that allows it to traverse tissue. Interaction with tick I.ricinus salivary protein Salp15 protects the bacteria from antibody-mediated killing in vitro and in vivo. In Borreliella burgdorferi (Lyme disease spirochete), this protein is Outer surface protein C.